The chain runs to 301 residues: Acetylglutamate kinase (301 aa).

Substrate contacts are provided by residues G72 to G73, R94, and N199.

Belongs to the acetylglutamate kinase family. ArgB subfamily.

It localises to the cytoplasm. The enzyme catalyses N-acetyl-L-glutamate + ATP = N-acetyl-L-glutamyl 5-phosphate + ADP. It participates in amino-acid biosynthesis; L-arginine biosynthesis; N(2)-acetyl-L-ornithine from L-glutamate: step 2/4. Its function is as follows. Catalyzes the ATP-dependent phosphorylation of N-acetyl-L-glutamate. This Azorhizobium caulinodans (strain ATCC 43989 / DSM 5975 / JCM 20966 / LMG 6465 / NBRC 14845 / NCIMB 13405 / ORS 571) protein is Acetylglutamate kinase.